The primary structure comprises 1766 residues: DNA-directed RNA polymerase II subunit RPB1-A (1766 aa).

Positions 69, 72, 79, and 82 each coordinate Zn(2+). Asp487, Asp489, and Asp491 together coordinate Mg(2+). The interval 813-825 is bridging helix; it reads PHEFFFHTMAGRE. The interval 1660–1766 is disordered; the sequence is HAMSSAAPPS…EFGDEEEEEQ (107 aa). Positions 1706-1716 are enriched in basic and acidic residues; it reads RGDEPSTHRSD. A compositionally biased stretch (low complexity) spans 1742–1756; sequence PTAKTPQQAAPPTAA.

It belongs to the RNA polymerase beta' chain family. In terms of assembly, component of the RNA polymerase II (Pol II) complex consisting of 12 subunits.

It is found in the nucleus. The enzyme catalyses RNA(n) + a ribonucleoside 5'-triphosphate = RNA(n+1) + diphosphate. DNA-dependent RNA polymerase catalyzes the transcription of DNA into RNA using the four ribonucleoside triphosphates as substrates. Largest and catalytic component of RNA polymerase II which synthesizes mRNA precursors and many functional non-coding RNAs. Forms the polymerase active center together with the second largest subunit. Pol II is the central component of the basal RNA polymerase II transcription machinery. It is composed of mobile elements that move relative to each other. RPB1 is part of the core element with the central large cleft, the clamp element that moves to open and close the cleft and the jaws that are thought to grab the incoming DNA template. At the start of transcription, a single-stranded DNA template strand of the promoter is positioned within the central active site cleft of Pol II. A bridging helix emanates from RPB1 and crosses the cleft near the catalytic site and is thought to promote translocation of Pol II by acting as a ratchet that moves the RNA-DNA hybrid through the active site by switching from straight to bent conformations at each step of nucleotide addition. During transcription elongation, Pol II moves on the template as the transcript elongates. This Trypanosoma brucei brucei protein is DNA-directed RNA polymerase II subunit RPB1-A (TRP4.8).